The following is a 368-amino-acid chain: NAD(P)H-quinone oxidoreductase subunit 1, chloroplastic (368 aa).

Helical transmembrane passes span 27 to 47, 97 to 117, 130 to 150, 269 to 289, 308 to 328, and 348 to 368; these read FIWI…GVLV, WLFN…YLVI, IGVF…LMAG, SSLF…PFLL, IIIG…IAIM, and FLLP…AFLL.

The protein belongs to the complex I subunit 1 family. As to quaternary structure, NDH is composed of at least 16 different subunits, 5 of which are encoded in the nucleus.

It is found in the plastid. Its subcellular location is the chloroplast thylakoid membrane. The enzyme catalyses a plastoquinone + NADH + (n+1) H(+)(in) = a plastoquinol + NAD(+) + n H(+)(out). It catalyses the reaction a plastoquinone + NADPH + (n+1) H(+)(in) = a plastoquinol + NADP(+) + n H(+)(out). NDH shuttles electrons from NAD(P)H:plastoquinone, via FMN and iron-sulfur (Fe-S) centers, to quinones in the photosynthetic chain and possibly in a chloroplast respiratory chain. The immediate electron acceptor for the enzyme in this species is believed to be plastoquinone. Couples the redox reaction to proton translocation, and thus conserves the redox energy in a proton gradient. This is NAD(P)H-quinone oxidoreductase subunit 1, chloroplastic from Physcomitrium patens (Spreading-leaved earth moss).